We begin with the raw amino-acid sequence, 313 residues long: Pyrimidine-specific ribonucleoside hydrolase RihA (313 aa).

H240 is a catalytic residue.

The protein belongs to the IUNH family. RihA subfamily.

Its function is as follows. Hydrolyzes cytidine or uridine to ribose and cytosine or uracil, respectively. The chain is Pyrimidine-specific ribonucleoside hydrolase RihA from Enterobacter sp. (strain 638).